A 305-amino-acid chain; its full sequence is Heterogeneous nuclear ribonucleoprotein A0 (305 aa).

N-acetylmethionine is present on Met-1. Positions 7-86 (CKLFIGGLNV…VELKRAVSRE (80 aa)) constitute an RRM 1 domain. Residue Ser-68 is modified to Phosphoserine. Lys-80 is covalently cross-linked (Glycyl lysine isopeptide (Lys-Gly) (interchain with G-Cter in SUMO2)). At Ser-84 the chain carries Phosphoserine; by MAPKAPK2. Glycyl lysine isopeptide (Lys-Gly) (interchain with G-Cter in SUMO2) cross-links involve residues Lys-96, Lys-98, Lys-99, and Lys-106. The RRM 2 domain maps to 98–175 (KKLFVGGLKG…HRVEVKKAVP (78 aa)). Position 133 is an N6-acetyllysine (Lys-133). Arg-139 bears the Omega-N-methylarginine mark. Glycyl lysine isopeptide (Lys-Gly) (interchain with G-Cter in SUMO2) cross-links involve residues Lys-154, Lys-159, Lys-172, and Lys-176. Disordered regions lie at residues 174-214 (VPKE…KGGG) and 262-305 (QSSY…GSSF). 2 stretches are compositionally biased toward gly residues: residues 181 to 200 (SGGG…GRGR) and 269 to 281 (KSGG…GSSW). Position 188 is a phosphoserine (Ser-188). Residue Arg-284 is modified to Omega-N-methylarginine. Residues 290–305 (YRGGYGGGGGYGGSSF) show a composition bias toward gly residues. Arg-291 is modified (asymmetric dimethylarginine; alternate). A Dimethylated arginine; alternate modification is found at Arg-291. At Arg-291 the chain carries Omega-N-methylarginine; alternate.

In terms of processing, phosphorylated at Ser-84 by MAPKAPK2 in response to LPS treatment, promoting stabilization of GADD45A mRNA. Post-translationally, arg-291 is dimethylated, probably to asymmetric dimethylarginine.

The protein resides in the nucleus. In terms of biological role, mRNA-binding component of ribonucleosomes. Specifically binds AU-rich element (ARE)-containing mRNAs. Involved in post-transcriptional regulation of cytokines mRNAs. The chain is Heterogeneous nuclear ribonucleoprotein A0 (HNRNPA0) from Homo sapiens (Human).